A 285-amino-acid chain; its full sequence is Nucleotide-binding protein Geob_2284 (285 aa).

Residue 8–15 coordinates ATP; that stretch reads GLSGSGKS. A GTP-binding site is contributed by 59-62; that stretch reads DIRG.

The protein belongs to the RapZ-like family.

Its function is as follows. Displays ATPase and GTPase activities. This Geotalea daltonii (strain DSM 22248 / JCM 15807 / FRC-32) (Geobacter daltonii) protein is Nucleotide-binding protein Geob_2284.